Reading from the N-terminus, the 365-residue chain is tRNA-specific 2-thiouridylase MnmA (365 aa).

Residues 6–13 (AMSGGVDS) and Leu32 contribute to the ATP site. Cys101 functions as the Nucleophile in the catalytic mechanism. A disulfide bond links Cys101 and Cys199. ATP is bound at residue Gly125. The segment at 149–151 (KDQ) is interaction with tRNA. Cys199 functions as the Cysteine persulfide intermediate in the catalytic mechanism.

The protein belongs to the MnmA/TRMU family.

It is found in the cytoplasm. It carries out the reaction S-sulfanyl-L-cysteinyl-[protein] + uridine(34) in tRNA + AH2 + ATP = 2-thiouridine(34) in tRNA + L-cysteinyl-[protein] + A + AMP + diphosphate + H(+). Its function is as follows. Catalyzes the 2-thiolation of uridine at the wobble position (U34) of tRNA, leading to the formation of s(2)U34. The polypeptide is tRNA-specific 2-thiouridylase MnmA (Corynebacterium glutamicum (strain R)).